A 396-amino-acid chain; its full sequence is Ribosomal RNA large subunit methyltransferase I (396 aa).

Positions 2 to 79 constitute a PUA domain; sequence AIRIKLKPGR…REEEIDREFF (78 aa).

This sequence belongs to the methyltransferase superfamily. RlmI family.

It is found in the cytoplasm. The catalysed reaction is cytidine(1962) in 23S rRNA + S-adenosyl-L-methionine = 5-methylcytidine(1962) in 23S rRNA + S-adenosyl-L-homocysteine + H(+). Specifically methylates the cytosine at position 1962 (m5C1962) of 23S rRNA. The sequence is that of Ribosomal RNA large subunit methyltransferase I from Shewanella baltica (strain OS155 / ATCC BAA-1091).